A 746-amino-acid polypeptide reads, in one-letter code: Exostosin-1 (746 aa).

Topologically, residues 1-5 are cytoplasmic; the sequence is MQAKK. Residues 6 to 26 form a helical; Signal-anchor for type II membrane protein membrane-spanning segment; sequence RYFILLSAGSCLALLFYFGGV. Residues 27-746 are Lumenal-facing; the sequence is QFRASRSHSR…RKKYRDIERL (720 aa). An N-linked (GlcNAc...) asparagine glycan is attached at N89. Intrachain disulfides connect C98–C103 and C109–C152. 2 residues coordinate a protein: L166 and Y203. The UDP site is built by K267, K269, Y271, and R280. Cysteines 298 and 312 form a disulfide. H300 is an a protein binding site. The UDP site is built by Y319 and Y324. N330 carries an N-linked (GlcNAc...) asparagine glycan. 2 disulfides stabilise this stretch: C334–C355 and C652–C704. UDP contacts are provided by R346 and E349.

This sequence belongs to the glycosyltransferase 47 family. Part of the heparan sulfate polymerase, a dimeric complex composed of EXT1 and EXT2. Could also form homooligomeric complexes. Interacts with NDST1. In terms of processing, N-glycosylated.

It localises to the golgi apparatus membrane. The protein localises to the golgi apparatus. It is found in the cis-Golgi network membrane. The protein resides in the endoplasmic reticulum membrane. It carries out the reaction 3-O-{alpha-D-GlcNAc-[(1-&gt;4)-beta-D-GlcA-(1-&gt;4)-alpha-D-GlcNAc](n)-(1-&gt;4)-beta-D-GlcA-(1-&gt;3)-beta-D-Gal-(1-&gt;3)-beta-D-Gal-(1-&gt;4)-beta-D-Xyl}-L-seryl-[protein] + UDP-alpha-D-glucuronate = 3-O-{[(1-&gt;4)-beta-D-GlcA-(1-&gt;4)-alpha-D-GlcNAc](n+1)-(1-&gt;4)-beta-D-GlcA-(1-&gt;3)-beta-D-Gal-(1-&gt;3)-beta-D-Gal-(1-&gt;4)-beta-D-Xyl}-L-seryl-[protein] + UDP + H(+). The protein operates within protein modification; protein glycosylation. Its function is as follows. Glycosyltransferase forming with EXT2 the heterodimeric heparan sulfate polymerase which catalyzes the elongation of the heparan sulfate glycan backbone. Glycan backbone extension consists in the alternating transfer of (1-&gt;4)-beta-D-GlcA and (1-&gt;4)-alpha-D-GlcNAc residues from their respective UDP-sugar donors. Both EXT1 and EXT2 are required for the full activity of the polymerase since EXT1 bears the N-acetylglucosaminyl-proteoglycan 4-beta-glucuronosyltransferase activity within the complex while EXT2 carries the glucuronosyl-N-acetylglucosaminyl-proteoglycan 4-alpha-N-acetylglucosaminyltransferase activity. Heparan sulfate proteoglycans are ubiquitous components of the extracellular matrix and play an important role in tissue homeostasis and signaling. This Cricetulus griseus (Chinese hamster) protein is Exostosin-1.